Reading from the N-terminus, the 614-residue chain is BTB/POZ domain-containing protein At5g48800 (614 aa).

One can recognise a BTB domain in the interval 43–111 (SDITIEVNGG…CYGINFEITS (69 aa)). The 266-residue stretch at 219-484 (DWWIEDLSVL…VQVLYFEQLK (266 aa)) folds into the NPH3 domain. Y425 carries the post-translational modification Phosphotyrosine. 2 disordered regions span residues 492–525 (SYSD…KDNY) and 583–614 (GHSS…ASTD). Residues 507 to 521 (SWRINSGALSATMSP) show a composition bias toward polar residues. The stretch at 522–562 (KDNYASLRRENRELKLELARLRMRLNDLEKEHICMKRDMQR) forms a coiled coil. The segment covering 583-597 (GHSSSRGSSSPSKQS) has biased composition (low complexity).

It belongs to the NPH3 family.

The protein operates within protein modification; protein ubiquitination. Its function is as follows. May act as a substrate-specific adapter of an E3 ubiquitin-protein ligase complex (CUL3-RBX1-BTB) which mediates the ubiquitination and subsequent proteasomal degradation of target proteins. This Arabidopsis thaliana (Mouse-ear cress) protein is BTB/POZ domain-containing protein At5g48800.